The primary structure comprises 269 residues: Intermembrane phospholipid transport system ATP-binding protein MlaF (269 aa).

One can recognise an ABC transporter domain in the interval 9–245; that stretch reads VDMRDVSFTR…PDPRVRQFLD (237 aa). 41–48 serves as a coordination point for ATP; it reads GPSGIGKT.

The protein belongs to the ABC transporter superfamily. MlaF family. In terms of assembly, the complex is composed of two ATP-binding proteins (MlaF), two transmembrane proteins (MlaE), two cytoplasmic solute-binding proteins (MlaB) and six periplasmic solute-binding proteins (MlaD).

The protein localises to the cell inner membrane. In terms of biological role, part of the ABC transporter complex MlaFEDB, which is involved in a phospholipid transport pathway that maintains lipid asymmetry in the outer membrane by retrograde trafficking of phospholipids from the outer membrane to the inner membrane. Responsible for energy coupling to the transport system. This is Intermembrane phospholipid transport system ATP-binding protein MlaF from Escherichia coli O157:H7.